A 436-amino-acid polypeptide reads, in one-letter code: 3-ketoacyl-CoA thiolase (436 aa).

Catalysis depends on Cys99, which acts as the Acyl-thioester intermediate. Residues His392 and Cys422 each act as proton acceptor in the active site.

The protein belongs to the thiolase-like superfamily. Thiolase family. As to quaternary structure, heterotetramer of two alpha chains (FadJ) and two beta chains (FadI).

Its subcellular location is the cytoplasm. The enzyme catalyses an acyl-CoA + acetyl-CoA = a 3-oxoacyl-CoA + CoA. The protein operates within lipid metabolism; fatty acid beta-oxidation. Catalyzes the final step of fatty acid oxidation in which acetyl-CoA is released and the CoA ester of a fatty acid two carbons shorter is formed. In Salmonella choleraesuis (strain SC-B67), this protein is 3-ketoacyl-CoA thiolase.